The primary structure comprises 71 residues: Small ribosomal subunit protein bS18c (71 aa).

It belongs to the bacterial ribosomal protein bS18 family. Part of the 30S ribosomal subunit.

The protein localises to the plastid. Its subcellular location is the chloroplast. In Mesostigma viride (Green alga), this protein is Small ribosomal subunit protein bS18c (rps18).